A 604-amino-acid chain; its full sequence is Glutamine--fructose-6-phosphate aminotransferase [isomerizing] (604 aa).

C2 serves as the catalytic Nucleophile; for GATase activity. The Glutamine amidotransferase type-2 domain occupies 2–218 (CGIVGVVGNR…DKELVILTKD (217 aa)). SIS domains lie at 284-423 (IITS…ANGK) and 452-594 (VAEK…VDKP). K599 (for Fru-6P isomerization activity) is an active-site residue.

As to quaternary structure, homodimer.

It is found in the cytoplasm. The enzyme catalyses D-fructose 6-phosphate + L-glutamine = D-glucosamine 6-phosphate + L-glutamate. Functionally, catalyzes the first step in hexosamine metabolism, converting fructose-6P into glucosamine-6P using glutamine as a nitrogen source. This Streptococcus pyogenes serotype M3 (strain ATCC BAA-595 / MGAS315) protein is Glutamine--fructose-6-phosphate aminotransferase [isomerizing].